The primary structure comprises 155 residues: Sec-independent protein translocase protein TatB (155 aa).

Residues 1 to 21 (MIDLGISKIALIGAVALIVIG) form a helical membrane-spanning segment. Disordered regions lie at residues 81–103 (ASDF…LPGF) and 131–155 (SGIR…SRKA). Over residues 89–98 (SETTGSTSSD) the composition is skewed to polar residues.

It belongs to the TatB family. In terms of assembly, the Tat system comprises two distinct complexes: a TatABC complex, containing multiple copies of TatA, TatB and TatC subunits, and a separate TatA complex, containing only TatA subunits. Substrates initially bind to the TatABC complex, which probably triggers association of the separate TatA complex to form the active translocon.

It is found in the cell inner membrane. In terms of biological role, part of the twin-arginine translocation (Tat) system that transports large folded proteins containing a characteristic twin-arginine motif in their signal peptide across membranes. Together with TatC, TatB is part of a receptor directly interacting with Tat signal peptides. TatB may form an oligomeric binding site that transiently accommodates folded Tat precursor proteins before their translocation. The polypeptide is Sec-independent protein translocase protein TatB (Polaromonas naphthalenivorans (strain CJ2)).